Reading from the N-terminus, the 100-residue chain is Small ribosomal subunit protein uS14c (100 aa).

The protein belongs to the universal ribosomal protein uS14 family. In terms of assembly, part of the 30S ribosomal subunit.

The protein resides in the plastid. The protein localises to the chloroplast. Binds 16S rRNA, required for the assembly of 30S particles. In Bigelowiella natans (Pedinomonas minutissima), this protein is Small ribosomal subunit protein uS14c.